Reading from the N-terminus, the 89-residue chain is UPF0223 protein BCG9842_B1176 (89 aa).

It belongs to the UPF0223 family.

The chain is UPF0223 protein BCG9842_B1176 from Bacillus cereus (strain G9842).